Reading from the N-terminus, the 121-residue chain is UPF0102 protein Hhal_2103 (121 aa).

The segment at 1–20 (MMAPQTTRNDPRQRGQEAEE) is disordered. The segment covering 9-20 (NDPRQRGQEAEE) has biased composition (basic and acidic residues).

This sequence belongs to the UPF0102 family.

The polypeptide is UPF0102 protein Hhal_2103 (Halorhodospira halophila (strain DSM 244 / SL1) (Ectothiorhodospira halophila (strain DSM 244 / SL1))).